The primary structure comprises 326 residues: Interleukin-1-binding protein (326 aa).

An N-terminal signal peptide occupies residues M1–V18. Ig-like C2-type domains lie at P24 to T115, S122 to T208, and P221 to T322. C48 and C99 are disulfide-bonded. N-linked (GlcNAc...) asparagine; by host glycosylation is found at N80, N103, and N113. The cysteines at positions 143 and 194 are disulfide-linked. N237 carries an N-linked (GlcNAc...) asparagine; by host glycan. C242 and C309 are disulfide-bonded.

It belongs to the interleukin-1 receptor family. In terms of assembly, interacts with mouse Il1b.

It localises to the secreted. In terms of biological role, may reduce the host inflammatory response by interacting with inteleukin-1 beta (Il1b) and thus decreasing the association between IL1B and its cellular receptor. This Bos taurus (Bovine) protein is Interleukin-1-binding protein (OPG201).